Reading from the N-terminus, the 281-residue chain is MTTTSAPDVYCVMGHPVEHSRSPWIHARFAELTGQRIAYTRRLVPLDGFARALADFAAAGGAGCNVTVPFKHDAARLATHASDRVRRAGAANTLSFRADGTVHAENTDGLGLVADIVVNAGVALAGRDVLLVGAGGAAAGVLAPLLDQAPRRITVANRTEARAQALVQAHADLAASRQVVLEALPIGQPGTGFDVVINATASSLAGGEVPVPDTVLREGTLAYDMMYGPAAQGFMDWARAHGAVPRDGLGMLVEQAAEAFAVWRGVRPPAAQVLQELRAQL.

Shikimate is bound by residues 20–22 (SRS) and Thr-67. Residue Lys-71 is the Proton acceptor of the active site. Asp-83 contributes to the NADP(+) binding site. Positions 92 and 108 each coordinate shikimate. Residues 133 to 137 (GAGGA), 157 to 162 (NRTEAR), and Met-225 each bind NADP(+). Shikimate is bound at residue Tyr-227. Gly-248 serves as a coordination point for NADP(+).

It belongs to the shikimate dehydrogenase family. In terms of assembly, homodimer.

It carries out the reaction shikimate + NADP(+) = 3-dehydroshikimate + NADPH + H(+). It participates in metabolic intermediate biosynthesis; chorismate biosynthesis; chorismate from D-erythrose 4-phosphate and phosphoenolpyruvate: step 4/7. Its function is as follows. Involved in the biosynthesis of the chorismate, which leads to the biosynthesis of aromatic amino acids. Catalyzes the reversible NADPH linked reduction of 3-dehydroshikimate (DHSA) to yield shikimate (SA). The sequence is that of Shikimate dehydrogenase (NADP(+)) from Paracidovorax citrulli (strain AAC00-1) (Acidovorax citrulli).